The chain runs to 157 residues: Endoribonuclease YbeY (157 aa).

Positions 113, 117, and 123 each coordinate Zn(2+).

This sequence belongs to the endoribonuclease YbeY family. Zn(2+) serves as cofactor.

It localises to the cytoplasm. In terms of biological role, single strand-specific metallo-endoribonuclease involved in late-stage 70S ribosome quality control and in maturation of the 3' terminus of the 16S rRNA. This chain is Endoribonuclease YbeY, found in Ehrlichia ruminantium (strain Gardel).